Reading from the N-terminus, the 341-residue chain is MASEAPPFWWDEPDWRALALAPAAWIYGRVSGRRLIRAVPPRVSLPVLCVGNFTVGGAGKTPTAIAFARGAIARGMKPGIVSRGYGGNYSGLHLVDPGHDGARHVGDEPLLLARHAAVALSPDRVKAAEYLKSLGCDFIIMDDGFQSARLHADFSLLVVDASRGIGNGRVIPAGPLRAPLTDQMRKTDALLCIGKGNGADFVIRQAARAGRPIYHAQLRPSSSATVAGRRWLAFAGIGNPDKFYESVRQAGGEVVETHSFADHYSFEPDDIRGLVDMARRQGLGLITTAKDHVRLATMPGVPPEFLSKLAVLDVDLEFDRTDALGHILDTVVERFKSRLHG.

Position 54-61 (54-61) interacts with ATP; the sequence is TVGGAGKT.

It belongs to the LpxK family.

It catalyses the reaction a lipid A disaccharide + ATP = a lipid IVA + ADP + H(+). It functions in the pathway glycolipid biosynthesis; lipid IV(A) biosynthesis; lipid IV(A) from (3R)-3-hydroxytetradecanoyl-[acyl-carrier-protein] and UDP-N-acetyl-alpha-D-glucosamine: step 6/6. Its function is as follows. Transfers the gamma-phosphate of ATP to the 4'-position of a tetraacyldisaccharide 1-phosphate intermediate (termed DS-1-P) to form tetraacyldisaccharide 1,4'-bis-phosphate (lipid IVA). The polypeptide is Tetraacyldisaccharide 4'-kinase (Brucella melitensis biotype 2 (strain ATCC 23457)).